Here is a 508-residue protein sequence, read N- to C-terminus: BTB/POZ domain-containing protein At3g03510 (508 aa).

A BTB domain is found at 11–77; the sequence is QDLDLYVKGV…CYGYKIELSA (67 aa). The NPH3 domain maps to 156 to 414; sequence TRLLQDLITL…MQVLFVSQMQ (259 aa). Residue tyrosine 355 is modified to Phosphotyrosine.

It belongs to the NPH3 family.

Its pathway is protein modification; protein ubiquitination. Functionally, may act as a substrate-specific adapter of an E3 ubiquitin-protein ligase complex (CUL3-RBX1-BTB) which mediates the ubiquitination and subsequent proteasomal degradation of target proteins. This is BTB/POZ domain-containing protein At3g03510 from Arabidopsis thaliana (Mouse-ear cress).